Reading from the N-terminus, the 43-residue chain is Protein PsbN (43 aa).

Residues 4–24 (GILVVIFISCLLVSFTGYTIY) traverse the membrane as a helical segment.

This sequence belongs to the PsbN family.

It is found in the plastid. The protein localises to the chloroplast thylakoid membrane. Functionally, may play a role in photosystem I and II biogenesis. In Chaetosphaeridium globosum (Charophycean green alga), this protein is Protein PsbN.